We begin with the raw amino-acid sequence, 422 residues long: Aliphatic (R)-hydroxynitrile lyase (422 aa).

Residues Cys63, His85, Cys115, Cys118, Cys121, Cys129, and Cys199 each coordinate Zn(2+).

The protein belongs to the zinc-containing alcohol dehydrogenase family. Homodimer. Requires Zn(2+) as cofactor.

The catalysed reaction is (2R)-2-hydroxy-2-methylbutanenitrile = butan-2-one + hydrogen cyanide. In terms of biological role, involved in the catabolism of cyanogenic glycosides. Naturally occurring substrates are the aliphatic acetone cyanohydrin and butan-2-one cyanohydrin, which are the aglycones of the cyanogenic glycosides linamarin, lotaustralin, linustatin and neolinustatin. Can use various aliphatic ketones and aldehydes as substrates, but not aromatic ketones. The chain is Aliphatic (R)-hydroxynitrile lyase from Linum usitatissimum (Flax).